The following is a 296-amino-acid chain: Bifunctional protein FolD (296 aa).

Residues 166–168 (GRS), serine 195, and threonine 236 contribute to the NADP(+) site.

Belongs to the tetrahydrofolate dehydrogenase/cyclohydrolase family. As to quaternary structure, homodimer.

The enzyme catalyses (6R)-5,10-methylene-5,6,7,8-tetrahydrofolate + NADP(+) = (6R)-5,10-methenyltetrahydrofolate + NADPH. It catalyses the reaction (6R)-5,10-methenyltetrahydrofolate + H2O = (6R)-10-formyltetrahydrofolate + H(+). It participates in one-carbon metabolism; tetrahydrofolate interconversion. Functionally, catalyzes the oxidation of 5,10-methylenetetrahydrofolate to 5,10-methenyltetrahydrofolate and then the hydrolysis of 5,10-methenyltetrahydrofolate to 10-formyltetrahydrofolate. In Dehalococcoides mccartyi (strain CBDB1), this protein is Bifunctional protein FolD.